Reading from the N-terminus, the 325-residue chain is NADH-quinone oxidoreductase subunit H (325 aa).

8 helical membrane-spanning segments follow: residues 11-31 (ILLT…CGAF), 81-101 (VIFT…FAIV), 114-134 (IGIL…LFAG), 154-174 (LSYE…AGSF), 186-206 (VWNV…GVAV), 237-257 (FFVG…TLFF), 265-285 (LPPF…FILI), and 304-324 (ICLP…LWQA).

It belongs to the complex I subunit 1 family. In terms of assembly, NDH-1 is composed of 13 different subunits. Subunits NuoA, H, J, K, L, M, N constitute the membrane sector of the complex.

The protein localises to the cell inner membrane. The enzyme catalyses a quinone + NADH + 5 H(+)(in) = a quinol + NAD(+) + 4 H(+)(out). Functionally, NDH-1 shuttles electrons from NADH, via FMN and iron-sulfur (Fe-S) centers, to quinones in the respiratory chain. The immediate electron acceptor for the enzyme in this species is believed to be ubiquinone. Couples the redox reaction to proton translocation (for every two electrons transferred, four hydrogen ions are translocated across the cytoplasmic membrane), and thus conserves the redox energy in a proton gradient. This subunit may bind ubiquinone. The polypeptide is NADH-quinone oxidoreductase subunit H (Escherichia coli O7:K1 (strain IAI39 / ExPEC)).